A 98-amino-acid chain; its full sequence is uncharacterized protein (98 aa).

This is an uncharacterized protein from Human cytomegalovirus (strain AD169) (HHV-5).